A 398-amino-acid chain; its full sequence is Inner membrane protein YjgN (398 aa).

Residues 1–24 (MAQVINEMDVPSHSFVFHGTGERY) are Cytoplasmic-facing. A helical membrane pass occupies residues 25–45 (FLICVVNVLLTIITLGIYLPW). Residues 46–73 (ALMKCKRYLYANMEVNGQRFSYGITGGN) are Periplasmic-facing. Residues 74-94 (VFVSCLFFVFFYFAILMTVSA) traverse the membrane as a helical segment. A topological domain (cytoplasmic) is located at residue aspartate 95. The chain crosses the membrane as a helical span at residues 96-116 (MPLVGCVLTLLLLVLLIFMAA). Topologically, residues 117-142 (KGLRHQALMTSLNGVRFSFNCSMKGF) are periplasmic. A helical transmembrane segment spans residues 143–163 (WWVTFFLPILMAIGMGTVFFI). The Cytoplasmic portion of the chain corresponds to 164–175 (STKMLPANSSSS). The helical transmembrane segment at 176-196 (VIISMVLMAIVGIVSIGIFNG) threads the bilayer. Residues 197–228 (TLYSLVMSFLWSNTSFGIHRFKVKLDTTYCIK) are Periplasmic-facing. A helical transmembrane segment spans residues 229-249 (YAILAFLALLPFLAVAGYIIF). The Cytoplasmic portion of the chain corresponds to 250–278 (DQILNAYDSSVYANDDIENLQQFMEMQRK). A helical membrane pass occupies residues 279–299 (MIIAQLIYYFGIAVSTSYLTV). Residues 300 to 333 (SLRNHFMSNLSLNDGRIRFRLTLTYHGMLYRMCA) lie on the Periplasmic side of the membrane. A helical membrane pass occupies residues 334–354 (LVVISGITGGLAYPLLKIWMI). Residues 355 to 398 (DWQAKNTYLLGDLDDLPLINKEEQPDKGFLASISRGVMPSLPFL) lie on the Cytoplasmic side of the membrane.

Its subcellular location is the cell inner membrane. This is Inner membrane protein YjgN (yjgN) from Escherichia coli (strain K12).